Here is a 137-residue protein sequence, read N- to C-terminus: Large-conductance mechanosensitive channel (137 aa).

Helical transmembrane passes span 15–35 (IDLA…NSIV), 38–58 (IFMP…MFIQ), and 80–100 (GNFI…FLFV).

The protein belongs to the MscL family. As to quaternary structure, homopentamer.

It localises to the cell inner membrane. Channel that opens in response to stretch forces in the membrane lipid bilayer. May participate in the regulation of osmotic pressure changes within the cell. This Bartonella henselae (strain ATCC 49882 / DSM 28221 / CCUG 30454 / Houston 1) (Rochalimaea henselae) protein is Large-conductance mechanosensitive channel.